The chain runs to 493 residues: Probable cytochrome P450 313a2 (493 aa).

Position 438 (Cys438) interacts with heme.

This sequence belongs to the cytochrome P450 family. Requires heme as cofactor.

It localises to the endoplasmic reticulum membrane. The protein resides in the microsome membrane. Functionally, may be involved in the metabolism of insect hormones and in the breakdown of synthetic insecticides. This chain is Probable cytochrome P450 313a2 (Cyp313a2), found in Drosophila melanogaster (Fruit fly).